Here is a 62-residue protein sequence, read N- to C-terminus: Short neurotoxin B (62 aa).

The segment covering 1-16 (RRCFNHPSSQPQTNKS) has biased composition (polar residues). A disordered region spans residues 1–21 (RRCFNHPSSQPQTNKSCPPGE). Cystine bridges form between Cys-3-Cys-24, Cys-17-Cys-41, Cys-43-Cys-54, and Cys-55-Cys-60.

The protein belongs to the three-finger toxin family. Short-chain subfamily. Type I alpha-neurotoxin sub-subfamily. As to expression, expressed by the venom gland.

The protein localises to the secreted. Binds to muscle nicotinic acetylcholine receptor (nAChR) and inhibit acetylcholine from binding to the receptor, thereby impairing neuromuscular transmission. The protein is Short neurotoxin B of Laticauda crockeri (Crocker's sea snake).